Consider the following 194-residue polypeptide: Ribosomal RNA small subunit methyltransferase G (194 aa).

S-adenosyl-L-methionine contacts are provided by residues Gly-70, Tyr-75, 121-122, and Arg-135; that span reads VE.

This sequence belongs to the methyltransferase superfamily. RNA methyltransferase RsmG family.

Its subcellular location is the cytoplasm. The catalysed reaction is guanosine(527) in 16S rRNA + S-adenosyl-L-methionine = N(7)-methylguanosine(527) in 16S rRNA + S-adenosyl-L-homocysteine. Its function is as follows. Specifically methylates the N7 position of guanine in position 527 of 16S rRNA. This chain is Ribosomal RNA small subunit methyltransferase G, found in Aliarcobacter butzleri (strain RM4018) (Arcobacter butzleri).